Reading from the N-terminus, the 202-residue chain is Large ribosomal subunit protein uL18 (202 aa).

Belongs to the universal ribosomal protein uL18 family. As to quaternary structure, part of the 50S ribosomal subunit. Contacts the 5S and 23S rRNAs.

Its function is as follows. This is one of the proteins that bind and probably mediate the attachment of the 5S RNA into the large ribosomal subunit, where it forms part of the central protuberance. The chain is Large ribosomal subunit protein uL18 from Methanopyrus kandleri (strain AV19 / DSM 6324 / JCM 9639 / NBRC 100938).